We begin with the raw amino-acid sequence, 157 residues long: UPF0251 protein CLD_3165 (157 aa).

This sequence belongs to the UPF0251 family.

This is UPF0251 protein CLD_3165 from Clostridium botulinum (strain Okra / Type B1).